A 316-amino-acid chain; its full sequence is Ribosomal RNA small subunit methyltransferase H (316 aa).

S-adenosyl-L-methionine is bound by residues 35-37, aspartate 55, phenylalanine 84, aspartate 105, and glutamine 112; that span reads AGH.

The protein belongs to the methyltransferase superfamily. RsmH family.

The protein resides in the cytoplasm. The enzyme catalyses cytidine(1402) in 16S rRNA + S-adenosyl-L-methionine = N(4)-methylcytidine(1402) in 16S rRNA + S-adenosyl-L-homocysteine + H(+). Specifically methylates the N4 position of cytidine in position 1402 (C1402) of 16S rRNA. The protein is Ribosomal RNA small subunit methyltransferase H of Streptococcus sanguinis (strain SK36).